The sequence spans 147 residues: Nucleoside diphosphate kinase (147 aa).

Residues Lys-9, Phe-57, Arg-85, Thr-91, Arg-102, and Asn-112 each contribute to the ATP site. His-115 functions as the Pros-phosphohistidine intermediate in the catalytic mechanism.

The protein belongs to the NDK family. Mg(2+) is required as a cofactor.

The protein resides in the cytoplasm. It carries out the reaction a 2'-deoxyribonucleoside 5'-diphosphate + ATP = a 2'-deoxyribonucleoside 5'-triphosphate + ADP. It catalyses the reaction a ribonucleoside 5'-diphosphate + ATP = a ribonucleoside 5'-triphosphate + ADP. Its function is as follows. Major role in the synthesis of nucleoside triphosphates other than ATP. The ATP gamma phosphate is transferred to the NDP beta phosphate via a ping-pong mechanism, using a phosphorylated active-site intermediate. The chain is Nucleoside diphosphate kinase from Thermoplasma volcanium (strain ATCC 51530 / DSM 4299 / JCM 9571 / NBRC 15438 / GSS1).